A 620-amino-acid chain; its full sequence is Chaperone protein HscA homolog (620 aa).

This sequence belongs to the heat shock protein 70 family.

Its function is as follows. Chaperone involved in the maturation of iron-sulfur cluster-containing proteins. Has a low intrinsic ATPase activity which is markedly stimulated by HscB. The polypeptide is Chaperone protein HscA homolog (Shewanella sp. (strain MR-7)).